The chain runs to 122 residues: Small ribosomal subunit protein uS13 (122 aa).

Positions 99–122 are disordered; the sequence is RGQRTHTNARTRKGPAKAIAGKKK.

The protein belongs to the universal ribosomal protein uS13 family. Part of the 30S ribosomal subunit. Forms a loose heterodimer with protein S19. Forms two bridges to the 50S subunit in the 70S ribosome.

Functionally, located at the top of the head of the 30S subunit, it contacts several helices of the 16S rRNA. In the 70S ribosome it contacts the 23S rRNA (bridge B1a) and protein L5 of the 50S subunit (bridge B1b), connecting the 2 subunits; these bridges are implicated in subunit movement. Contacts the tRNAs in the A and P-sites. The protein is Small ribosomal subunit protein uS13 of Agrobacterium fabrum (strain C58 / ATCC 33970) (Agrobacterium tumefaciens (strain C58)).